A 373-amino-acid chain; its full sequence is Dual-specificity RNA methyltransferase RlmN (373 aa).

Glutamate 94 functions as the Proton acceptor in the catalytic mechanism. The region spanning 100–339 (EDDRATLCVS…VIVRKTRGDD (240 aa)) is the Radical SAM core domain. A disulfide bond links cysteine 107 and cysteine 344. Cysteine 114, cysteine 118, and cysteine 121 together coordinate [4Fe-4S] cluster. S-adenosyl-L-methionine-binding positions include 168 to 169 (GE), serine 200, 222 to 224 (SIH), and asparagine 301. Cysteine 344 (S-methylcysteine intermediate) is an active-site residue.

The protein belongs to the radical SAM superfamily. RlmN family. [4Fe-4S] cluster serves as cofactor.

The protein resides in the cytoplasm. It catalyses the reaction adenosine(2503) in 23S rRNA + 2 reduced [2Fe-2S]-[ferredoxin] + 2 S-adenosyl-L-methionine = 2-methyladenosine(2503) in 23S rRNA + 5'-deoxyadenosine + L-methionine + 2 oxidized [2Fe-2S]-[ferredoxin] + S-adenosyl-L-homocysteine. It carries out the reaction adenosine(37) in tRNA + 2 reduced [2Fe-2S]-[ferredoxin] + 2 S-adenosyl-L-methionine = 2-methyladenosine(37) in tRNA + 5'-deoxyadenosine + L-methionine + 2 oxidized [2Fe-2S]-[ferredoxin] + S-adenosyl-L-homocysteine. In terms of biological role, specifically methylates position 2 of adenine 2503 in 23S rRNA and position 2 of adenine 37 in tRNAs. m2A2503 modification seems to play a crucial role in the proofreading step occurring at the peptidyl transferase center and thus would serve to optimize ribosomal fidelity. The protein is Dual-specificity RNA methyltransferase RlmN of Shewanella baltica (strain OS185).